Reading from the N-terminus, the 202-residue chain is UDP-N-acetylglucosamine transferase subunit ALG13 (202 aa).

It belongs to the glycosyltransferase 28 family. Heterodimer with ALG14 to form a functional enzyme.

Its subcellular location is the endoplasmic reticulum. It carries out the reaction an N-acetyl-alpha-D-glucosaminyl-diphospho-di-trans,poly-cis-dolichol + UDP-N-acetyl-alpha-D-glucosamine = an N,N'-diacetylchitobiosyl-diphospho-di-trans,poly-cis-dolichol + UDP + H(+). Involved in protein N-glycosylation. Essential for the second step of the dolichol-linked oligosaccharide pathway. In Saccharomyces cerevisiae (strain ATCC 204508 / S288c) (Baker's yeast), this protein is UDP-N-acetylglucosamine transferase subunit ALG13 (ALG13).